A 40-amino-acid chain; its full sequence is uncharacterized protein (40 aa).

This is an uncharacterized protein from Dictyostelium discoideum (Social amoeba).